The chain runs to 1702 residues: Immunoglobulin A1 protease autotransporter (1702 aa).

The signal sequence occupies residues 1-25; it reads MLNKKFKLNFIALTVAYALTPYTEA. The 307-residue stretch at 26 to 332 folds into the Peptidase S6 domain; sequence ALVRDDVDYQ…NIYKPEFAKT (307 aa). Ser288 is a catalytic residue. Residues 991–1411 are disordered; sequence VEKRNQTVDT…GSDRSTVALR (421 aa). Over residues 997 to 1021 the composition is skewed to polar residues; that stretch reads TVDTTNITTPNNIQADVPSVPSNNE. A compositionally biased stretch (low complexity) spans 1037–1047; the sequence is TPSETTETVAE. Residues 1049–1061 show a composition bias toward basic and acidic residues; it reads SKQESKTVEKNEQ. The span at 1082-1095 shows a compositional bias: polar residues; the sequence is KANTQTNEVAQSGS. Composition is skewed to basic and acidic residues over residues 1104-1132 and 1150-1162; these read EIKE…KDEI and APKE…KVEE. Tandem repeats lie at residues 1109 to 1116 and 1117 to 1124. The 2 X 8 AA tandem repeats of A-K-V-E-K-E-E-K stretch occupies residues 1109-1124; it reads AKVEKEEKAKVEKEEK. 2 stretches are compositionally biased toward polar residues: residues 1163–1186 and 1207–1218; these read TQVQ…SPNS and VSKNQTENTTDQ. Over residues 1219 to 1234 the composition is skewed to basic and acidic residues; sequence PTEREKTAKVETEKTQ. Polar residues-rich tracts occupy residues 1235 to 1255, 1263 to 1305, and 1316 to 1341; these read EPPQ…TVQP, NVPT…TAIT, and TETA…VANN. A compositionally biased stretch (low complexity) spans 1360 to 1378; the sequence is ETSAEETTAASTDETTIAD. Residues 1382 to 1392 show a composition bias toward basic residues; sequence RSKPNRRSRRS. In terms of domain architecture, Autotransporter spans 1450 to 1702; the sequence is NNEGQYNVWV…TAELKLSFSF (253 aa).

It localises to the periplasm. It is found in the secreted. Its subcellular location is the cell surface. The protein resides in the cell outer membrane. It carries out the reaction Cleavage of immunoglobulin A molecules at certain Pro-|-Xaa bonds in the hinge region. No small molecule substrates are known.. Virulence factor; cleaves host immunoglobulin A producing intact Fc and Fab fragments. The polypeptide is Immunoglobulin A1 protease autotransporter (iga) (Haemophilus influenzae).